The chain runs to 262 residues: tRNA pseudouridine synthase A (262 aa).

Asp51 (nucleophile) is an active-site residue. Tyr109 serves as a coordination point for substrate.

This sequence belongs to the tRNA pseudouridine synthase TruA family. As to quaternary structure, homodimer.

The enzyme catalyses uridine(38/39/40) in tRNA = pseudouridine(38/39/40) in tRNA. Functionally, formation of pseudouridine at positions 38, 39 and 40 in the anticodon stem and loop of transfer RNAs. In Legionella pneumophila (strain Lens), this protein is tRNA pseudouridine synthase A.